The sequence spans 282 residues: Biotin synthase (282 aa).

The region spanning 1 to 228 (MQEIFLCSIS…NARLMVAGGR (228 aa)) is the Radical SAM core domain. [4Fe-4S] cluster is bound by residues cysteine 17, cysteine 21, and cysteine 24. Residues cysteine 61, cysteine 96, cysteine 154, and arginine 221 each contribute to the [2Fe-2S] cluster site.

It belongs to the radical SAM superfamily. Biotin synthase family. As to quaternary structure, homodimer. [4Fe-4S] cluster serves as cofactor. Requires [2Fe-2S] cluster as cofactor.

It carries out the reaction (4R,5S)-dethiobiotin + (sulfur carrier)-SH + 2 reduced [2Fe-2S]-[ferredoxin] + 2 S-adenosyl-L-methionine = (sulfur carrier)-H + biotin + 2 5'-deoxyadenosine + 2 L-methionine + 2 oxidized [2Fe-2S]-[ferredoxin]. It participates in cofactor biosynthesis; biotin biosynthesis; biotin from 7,8-diaminononanoate: step 2/2. Functionally, catalyzes the conversion of dethiobiotin (DTB) to biotin by the insertion of a sulfur atom into dethiobiotin via a radical-based mechanism. This chain is Biotin synthase, found in Helicobacter pylori (strain P12).